Reading from the N-terminus, the 419-residue chain is UDP-N-acetylglucosamine 1-carboxyvinyltransferase (419 aa).

22-23 (KN) contacts phosphoenolpyruvate. R95 contacts UDP-N-acetyl-alpha-D-glucosamine. Catalysis depends on C119, which acts as the Proton donor. C119 carries the 2-(S-cysteinyl)pyruvic acid O-phosphothioketal modification. Residues 164-167 (KVSV), D308, and I330 contribute to the UDP-N-acetyl-alpha-D-glucosamine site.

Belongs to the EPSP synthase family. MurA subfamily.

It localises to the cytoplasm. It carries out the reaction phosphoenolpyruvate + UDP-N-acetyl-alpha-D-glucosamine = UDP-N-acetyl-3-O-(1-carboxyvinyl)-alpha-D-glucosamine + phosphate. It participates in cell wall biogenesis; peptidoglycan biosynthesis. Its function is as follows. Cell wall formation. Adds enolpyruvyl to UDP-N-acetylglucosamine. This is UDP-N-acetylglucosamine 1-carboxyvinyltransferase from Rickettsia africae (strain ESF-5).